The following is a 397-amino-acid chain: L-asparaginase-like protein CG4372 (397 aa).

An N-terminal signal peptide occupies residues 1–22; the sequence is MLAQSCCLRLLILLLLFTTIGS. 3 disulfide bridges follow: Cys-90–Cys-95, Cys-189–Cys-205, and Cys-344–Cys-371.

The protein belongs to the Ntn-hydrolase family.

The chain is L-asparaginase-like protein CG4372 from Drosophila melanogaster (Fruit fly).